The primary structure comprises 831 residues: Probable glucan 1,3-beta-glucosidase D (831 aa).

Basic and acidic residues-rich tracts occupy residues 1–24 (MPSHSRSRDRYRSERDPSRRYREV), 44–56 (RRDDYQHDIRSHE), 79–93 (RSHDVEGRRRERSRA), 102–115 (SRRDRNRGGEEYRR), 137–151 (RDGQRARPRDMDREA), and 198–213 (QRERSQEQEQPRMESK). Disordered regions lie at residues 1-179 (MPSH…SGSH) and 192-241 (HYDE…GQSK). Residues 1–297 (MPSHSRSRDR…AQPPFWKRKK (297 aa)) are Cytoplasmic-facing. A helical; Signal-anchor for type II membrane protein membrane pass occupies residues 298–318 (WWIVIGVLVVVLAIVIPVAVV). Over 319-831 (MSKKHGHDDD…PSFGDLPEYY (513 aa)) the chain is Extracellular. N-linked (GlcNAc...) asparagine glycans are attached at residues Asn376, Asn381, Asn393, Asn410, Asn442, Asn546, and Asn558. Glu597 acts as the Proton donor in catalysis. N-linked (GlcNAc...) asparagine glycans are attached at residues Asn610, Asn636, Asn669, and Asn689. The active-site Nucleophile is the Glu702.

The protein belongs to the glycosyl hydrolase 5 (cellulase A) family.

The protein localises to the cell membrane. The enzyme catalyses Successive hydrolysis of beta-D-glucose units from the non-reducing ends of (1-&gt;3)-beta-D-glucans, releasing alpha-glucose.. Glucosidase involved in the degradation of cellulosic biomass. Active on lichenan. The polypeptide is Probable glucan 1,3-beta-glucosidase D (exgD) (Aspergillus oryzae (strain ATCC 42149 / RIB 40) (Yellow koji mold)).